The chain runs to 602 residues: Elongation factor 4 (602 aa).

One can recognise a tr-type G domain in the interval 7–190 (KHIRNFCIVA…AVVQKVPAPS (184 aa)). GTP is bound by residues 19 to 24 (DHGKST) and 137 to 140 (NKID).

Belongs to the TRAFAC class translation factor GTPase superfamily. Classic translation factor GTPase family. LepA subfamily.

Its subcellular location is the cell membrane. The catalysed reaction is GTP + H2O = GDP + phosphate + H(+). Required for accurate and efficient protein synthesis under certain stress conditions. May act as a fidelity factor of the translation reaction, by catalyzing a one-codon backward translocation of tRNAs on improperly translocated ribosomes. Back-translocation proceeds from a post-translocation (POST) complex to a pre-translocation (PRE) complex, thus giving elongation factor G a second chance to translocate the tRNAs correctly. Binds to ribosomes in a GTP-dependent manner. This chain is Elongation factor 4, found in Clostridium acetobutylicum (strain ATCC 824 / DSM 792 / JCM 1419 / IAM 19013 / LMG 5710 / NBRC 13948 / NRRL B-527 / VKM B-1787 / 2291 / W).